The sequence spans 210 residues: Na(+)-translocating NADH-quinone reductase subunit D (210 aa).

Transmembrane regions (helical) follow at residues 42 to 62, 66 to 86, 103 to 123, 131 to 151, 154 to 174, and 178 to 198; these read VVMT…ISTI, IPNS…VIVV, VYVG…AFAM, FMDG…VGAF, LFGS…NGGW, and NGLL…IWAV.

It belongs to the NqrDE/RnfAE family. As to quaternary structure, composed of six subunits; NqrA, NqrB, NqrC, NqrD, NqrE and NqrF.

The protein localises to the cell inner membrane. It catalyses the reaction a ubiquinone + n Na(+)(in) + NADH + H(+) = a ubiquinol + n Na(+)(out) + NAD(+). NQR complex catalyzes the reduction of ubiquinone-1 to ubiquinol by two successive reactions, coupled with the transport of Na(+) ions from the cytoplasm to the periplasm. NqrA to NqrE are probably involved in the second step, the conversion of ubisemiquinone to ubiquinol. The chain is Na(+)-translocating NADH-quinone reductase subunit D from Psychromonas ingrahamii (strain DSM 17664 / CCUG 51855 / 37).